We begin with the raw amino-acid sequence, 89 residues long: Small ribosomal subunit protein uS15 (89 aa).

Belongs to the universal ribosomal protein uS15 family. Part of the 30S ribosomal subunit. Forms a bridge to the 50S subunit in the 70S ribosome, contacting the 23S rRNA.

Its function is as follows. One of the primary rRNA binding proteins, it binds directly to 16S rRNA where it helps nucleate assembly of the platform of the 30S subunit by binding and bridging several RNA helices of the 16S rRNA. Forms an intersubunit bridge (bridge B4) with the 23S rRNA of the 50S subunit in the ribosome. This is Small ribosomal subunit protein uS15 from Elusimicrobium minutum (strain Pei191).